The chain runs to 294 residues: Glyceraldehyde-3-phosphate dehydrogenase (294 aa).

Residues D19, K63, and T105 each contribute to the NAD(+) site. Residues 134-136 (SCT), T165, 194-195 (TG), and R217 contribute to the D-glyceraldehyde 3-phosphate site. Residue C135 is the Nucleophile of the active site.

The protein belongs to the glyceraldehyde-3-phosphate dehydrogenase family. As to quaternary structure, homotetramer.

It localises to the cytoplasm. It catalyses the reaction D-glyceraldehyde 3-phosphate + phosphate + NAD(+) = (2R)-3-phospho-glyceroyl phosphate + NADH + H(+). It functions in the pathway carbohydrate degradation; glycolysis; pyruvate from D-glyceraldehyde 3-phosphate: step 1/5. Functionally, catalyzes the oxidative phosphorylation of glyceraldehyde 3-phosphate (G3P) to 1,3-bisphosphoglycerate (BPG) using the cofactor NAD. The first reaction step involves the formation of a hemiacetal intermediate between G3P and a cysteine residue, and this hemiacetal intermediate is then oxidized to a thioester, with concomitant reduction of NAD to NADH. The reduced NADH is then exchanged with the second NAD, and the thioester is attacked by a nucleophilic inorganic phosphate to produce BPG. In Serratia odorifera, this protein is Glyceraldehyde-3-phosphate dehydrogenase (gap).